A 195-amino-acid polypeptide reads, in one-letter code: 3-isopropylmalate dehydratase small subunit (195 aa).

This sequence belongs to the LeuD family. LeuD type 1 subfamily. As to quaternary structure, heterodimer of LeuC and LeuD.

It carries out the reaction (2R,3S)-3-isopropylmalate = (2S)-2-isopropylmalate. It functions in the pathway amino-acid biosynthesis; L-leucine biosynthesis; L-leucine from 3-methyl-2-oxobutanoate: step 2/4. In terms of biological role, catalyzes the isomerization between 2-isopropylmalate and 3-isopropylmalate, via the formation of 2-isopropylmaleate. The chain is 3-isopropylmalate dehydratase small subunit from Frankia casuarinae (strain DSM 45818 / CECT 9043 / HFP020203 / CcI3).